A 288-amino-acid polypeptide reads, in one-letter code: Syntaxin-1A (288 aa).

Topologically, residues 1 to 265 (MKDRTQELRT…KYQSKARRKK (265 aa)) are cytoplasmic. Residues serine 14, serine 64, and serine 95 each carry the phosphoserine modification. The stretch at 68–109 (DEKTKEELEELMSDIKKTANKVRSKLKSIEQSIEQEEGLNRS) forms a coiled coil. Serine 188 is modified (phosphoserine; by DAPK1). The region spanning 192–254 (LSEIETRHSE…ERAVSDTKKA (63 aa)) is the t-SNARE coiled-coil homology domain. Residues lysine 252, lysine 253, and lysine 256 each participate in a glycyl lysine isopeptide (Lys-Gly) (interchain with G-Cter in SUMO) cross-link. The helical; Anchor for type IV membrane protein transmembrane segment at 266–286 (IMIIICCVILGIVIASTVGGI) threads the bilayer. Residues 287–288 (FA) are Extracellular-facing.

It belongs to the syntaxin family. As to quaternary structure, part of the SNARE core complex containing SNAP25, VAMP2 and STX1A; this complex constitutes the basic catalytic machinery of the complex neurotransmitter release apparatus. The SNARE complex interacts with CPLX1. Interacts with STXBP1. The interaction with STXBP1 promotes assembly of the SNARE complex. Interacts (via C-terminus) with KCNB1 (via C-terminus); the interaction increases in a calcium-dependent manner and induces a pore-independent enhancement of exocytosis in neuroendocrine cells, chromaffin cells, pancreatic beta cells and from the soma of dorsal root ganglia (DRG) neurons. Interacts with SYTL4. Interacts with STXBP6. Interacts with PLCL1 (via C2 domain). Interacts with OTOF. Interacts with LGI3. Interacts (via the H3 domain) with SLC6A4 (via the N-terminus); this interaction regulates SLC4A6 channel conductance in thalamocortical neurons. Interacts with SYT6 and SYT8; the interaction is Ca(2+)-dependent. Interacts with VAMP8. Interacts with SNAP23. Interacts with VAPA and SYBU. Interacts with PRRT2. Interacts with SEPT8. Interacts with STXBP5L. Interacts with synaptotagmin-1/SYT1. Interacts with SEPTIN5; in the cerebellar cortex. Interacts with SEPTIN4; in the striatum. Post-translationally, phosphorylated by CK2. Phosphorylation at Ser-188 by DAPK1 significantly decreases its interaction with STXBP1. Sumoylated, sumoylation is required for regulation of synaptic vesicle endocytosis. In terms of tissue distribution, highly expressed in embryonic spinal cord and ganglia and in adult cerebellum and cerebral cortex. As to expression, expressed in heart, liver, fat, skeletal muscle, kidney and brain.

It localises to the cytoplasmic vesicle. Its subcellular location is the secretory vesicle. The protein localises to the synaptic vesicle membrane. It is found in the synapse. The protein resides in the synaptosome. It localises to the cell membrane. Its subcellular location is the secreted. In terms of biological role, plays an essential role in hormone and neurotransmitter calcium-dependent exocytosis and endocytosis. Part of the SNARE (Soluble NSF Attachment Receptor) complex composed of SNAP25, STX1A and VAMP2 which mediates the fusion of synaptic vesicles with the presynaptic plasma membrane. STX1A and SNAP25 are localized on the plasma membrane while VAMP2 resides in synaptic vesicles. The pairing of the three SNAREs from the N-terminal SNARE motifs to the C-terminal anchors leads to the formation of the SNARE complex, which brings membranes into close proximity and results in final fusion. Participates in the calcium-dependent regulation of acrosomal exocytosis in sperm. Also plays an important role in the exocytosis of hormones such as insulin or glucagon-like peptide 1 (GLP-1). The protein is Syntaxin-1A (STX1A) of Homo sapiens (Human).